The following is a 178-amino-acid chain: CDP-archaeol synthase (178 aa).

5 consecutive transmembrane segments (helical) span residues 3-23 (LLLLLFSALWYILPAYVANAV), 56-76 (FFGILFGIITGILQHFIVILY), 91-111 (IILSFLLATGALFGDMLGSFI), 131-151 (FIIFALLFAYSLYPVPANIIV), and 152-172 (LLLVISPIIHFSSNIIAYKLH).

The protein belongs to the CDP-archaeol synthase family. Requires Mg(2+) as cofactor.

It is found in the cell membrane. The enzyme catalyses 2,3-bis-O-(geranylgeranyl)-sn-glycerol 1-phosphate + CTP + H(+) = CDP-2,3-bis-O-(geranylgeranyl)-sn-glycerol + diphosphate. It functions in the pathway membrane lipid metabolism; glycerophospholipid metabolism. Functionally, catalyzes the formation of CDP-2,3-bis-(O-geranylgeranyl)-sn-glycerol (CDP-archaeol) from 2,3-bis-(O-geranylgeranyl)-sn-glycerol 1-phosphate (DGGGP) and CTP. This reaction is the third ether-bond-formation step in the biosynthesis of archaeal membrane lipids. This is CDP-archaeol synthase from Methanococcus maripaludis (strain DSM 14266 / JCM 13030 / NBRC 101832 / S2 / LL).